The chain runs to 204 residues: Holliday junction branch migration complex subunit RuvA (204 aa).

The tract at residues 1-64 (MIAQIRGKLI…QDSILLVGFC (64 aa)) is domain I. Residues 65 to 143 (TENEKQLFKL…GWTSKEQITF (79 aa)) are domain II. The tract at residues 144 to 154 (INNKKDAIDQS) is flexible linker. Residues 154 to 204 (SVMEEDAISALINLGYKSQAAKDAIDRVISEGGENKSLDVILKKALKVLAM) form a domain III region.

Belongs to the RuvA family. In terms of assembly, homotetramer. Forms an RuvA(8)-RuvB(12)-Holliday junction (HJ) complex. HJ DNA is sandwiched between 2 RuvA tetramers; dsDNA enters through RuvA and exits via RuvB. An RuvB hexamer assembles on each DNA strand where it exits the tetramer. Each RuvB hexamer is contacted by two RuvA subunits (via domain III) on 2 adjacent RuvB subunits; this complex drives branch migration. In the full resolvosome a probable DNA-RuvA(4)-RuvB(12)-RuvC(2) complex forms which resolves the HJ.

It is found in the cytoplasm. Its function is as follows. The RuvA-RuvB-RuvC complex processes Holliday junction (HJ) DNA during genetic recombination and DNA repair, while the RuvA-RuvB complex plays an important role in the rescue of blocked DNA replication forks via replication fork reversal (RFR). RuvA specifically binds to HJ cruciform DNA, conferring on it an open structure. The RuvB hexamer acts as an ATP-dependent pump, pulling dsDNA into and through the RuvAB complex. HJ branch migration allows RuvC to scan DNA until it finds its consensus sequence, where it cleaves and resolves the cruciform DNA. The protein is Holliday junction branch migration complex subunit RuvA of Syntrophus aciditrophicus (strain SB).